The chain runs to 558 residues: Ribonuclease J (558 aa).

Zn(2+) is bound by residues His81, His83, Asp85, His86, His148, and Asp170. 371–375 (HVSGH) serves as a coordination point for substrate. Position 397 (His397) interacts with Zn(2+).

The protein belongs to the metallo-beta-lactamase superfamily. RNA-metabolizing metallo-beta-lactamase-like family. Bacterial RNase J subfamily. In terms of assembly, homodimer. It depends on Zn(2+) as a cofactor.

The protein resides in the cytoplasm. Its function is as follows. An RNase that has endonuclease and 5'-3' exonuclease activity. The 5'-exonuclease activity acts on 5'-monophosphate but not 5'-triphosphate ends. Endonuclease activity can cleave within 4 nucleotides of the 5'-end of a triphosphorylated RNA. Plays the major role in pre-23S rRNA maturation, and a minor role in processing of pre-5S and pre-16S rRNA. The chain is Ribonuclease J from Mycolicibacterium smegmatis (strain ATCC 700084 / mc(2)155) (Mycobacterium smegmatis).